The following is a 289-amino-acid chain: Thiosulfate sulfurtransferase (289 aa).

In terms of domain architecture, Rhodanese 1 spans 24–142; it reads VGAGLRVLDA…WVKEGHPVTA (119 aa). A hinge region spans residues 143–158; that stretch reads EPSQPAEAVFKAKLDK. A Rhodanese 2 domain is found at 172 to 284; sequence GSKKFQVVDS…WFHRAPPQYK (113 aa). A substrate-binding site is contributed by Arg186. Cys244 functions as the Cysteine persulfide intermediate in the catalytic mechanism. Lys246 is a binding site for substrate.

As to quaternary structure, monomer. Expressed in numerous tissues.

The protein localises to the mitochondrion matrix. The enzyme catalyses thiosulfate + hydrogen cyanide = thiocyanate + sulfite + 2 H(+). Together with MRPL18, acts as a mitochondrial import factor for the cytosolic 5S rRNA. Only the nascent unfolded cytoplasmic form is able to bind to the 5S rRNA. Formation of iron-sulfur complexes and cyanide detoxification. The polypeptide is Thiosulfate sulfurtransferase (TST) (Gallus gallus (Chicken)).